A 28-amino-acid polypeptide reads, in one-letter code: Probable small spore coat assembly protein B (28 aa).

Residues 4–24 traverse the membrane as a helical segment; it reads VFAGGFALLVVLFILLIIIGA.

It belongs to the SscA family.

The protein resides in the membrane. The chain is Probable small spore coat assembly protein B from Bacillus subtilis (strain 168).